We begin with the raw amino-acid sequence, 364 residues long: Probable dual-specificity RNA methyltransferase RlmN (364 aa).

Catalysis depends on Glu-106, which acts as the Proton acceptor. Residues 112–350 enclose the Radical SAM core domain; the sequence is YPRRNTVCIS…SCTVRDTRGR (239 aa). A disulfide bridge links Cys-119 with Cys-356. [4Fe-4S] cluster-binding residues include Cys-126, Cys-130, and Cys-133. S-adenosyl-L-methionine-binding positions include 177–178, Ser-211, 234–236, and Asn-313; these read GE and SLH. Cys-356 functions as the S-methylcysteine intermediate in the catalytic mechanism.

It belongs to the radical SAM superfamily. RlmN family. [4Fe-4S] cluster serves as cofactor.

It localises to the cytoplasm. The enzyme catalyses adenosine(2503) in 23S rRNA + 2 reduced [2Fe-2S]-[ferredoxin] + 2 S-adenosyl-L-methionine = 2-methyladenosine(2503) in 23S rRNA + 5'-deoxyadenosine + L-methionine + 2 oxidized [2Fe-2S]-[ferredoxin] + S-adenosyl-L-homocysteine. It carries out the reaction adenosine(37) in tRNA + 2 reduced [2Fe-2S]-[ferredoxin] + 2 S-adenosyl-L-methionine = 2-methyladenosine(37) in tRNA + 5'-deoxyadenosine + L-methionine + 2 oxidized [2Fe-2S]-[ferredoxin] + S-adenosyl-L-homocysteine. In terms of biological role, specifically methylates position 2 of adenine 2503 in 23S rRNA and position 2 of adenine 37 in tRNAs. The protein is Probable dual-specificity RNA methyltransferase RlmN of Mycobacterium bovis (strain ATCC BAA-935 / AF2122/97).